The following is a 412-amino-acid chain: Inositol polyphosphate-5-phosphatase A (412 aa).

Cys409 carries the S-farnesyl cysteine lipid modification. A propeptide spans Val410 to Gln412 (removed in mature form).

It belongs to the inositol 1,4,5-trisphosphate 5-phosphatase type I family. As to quaternary structure, interacts with TASOR. Isoprenylation at Cys-409 is required for localization at the membrane. Predominantly expressed in heart, brain, and skeletal muscle. In brain; high level in Purkinje cells.

The protein resides in the cell membrane. The protein localises to the cell projection. It is found in the dendrite. It catalyses the reaction 1D-myo-inositol 1,4,5-trisphosphate + H2O = 1D-myo-inositol 1,4-bisphosphate + phosphate. It carries out the reaction 1D-myo-inositol 1,3,4,5-tetrakisphosphate + H2O = 1D-myo-inositol 1,3,4-trisphosphate + phosphate. Phosphatase that specifically hydrolyzes the 5-phosphate of inositol 1,4,5-trisphosphate to inositol 1,4-bisphosphate, and inositol 1,3,4,5-tetrasphosphate to inositol 1,3,4-trisphosphate. Plays a crucial role in the survival of cerebellar Purkinje cells. This is Inositol polyphosphate-5-phosphatase A from Homo sapiens (Human).